A 642-amino-acid polypeptide reads, in one-letter code: tRNA uridine 5-carboxymethylaminomethyl modification enzyme MnmG (642 aa).

FAD contacts are provided by residues 10–15 (GAGHAG), valine 122, and serine 177. 269–283 (SARYCPSLEDKVMRF) contributes to the NAD(+) binding site. Glutamine 366 contacts FAD.

It belongs to the MnmG family. As to quaternary structure, homodimer. Heterotetramer of two MnmE and two MnmG subunits. FAD serves as cofactor.

It is found in the cytoplasm. Its function is as follows. NAD-binding protein involved in the addition of a carboxymethylaminomethyl (cmnm) group at the wobble position (U34) of certain tRNAs, forming tRNA-cmnm(5)s(2)U34. This chain is tRNA uridine 5-carboxymethylaminomethyl modification enzyme MnmG, found in Syntrophobacter fumaroxidans (strain DSM 10017 / MPOB).